The following is a 217-amino-acid chain: Deoxyribose-phosphate aldolase (217 aa).

D95 (proton donor/acceptor) is an active-site residue. The Schiff-base intermediate with acetaldehyde role is filled by K156. K184 (proton donor/acceptor) is an active-site residue.

It belongs to the DeoC/FbaB aldolase family. DeoC type 1 subfamily.

The protein resides in the cytoplasm. The catalysed reaction is 2-deoxy-D-ribose 5-phosphate = D-glyceraldehyde 3-phosphate + acetaldehyde. The protein operates within carbohydrate degradation; 2-deoxy-D-ribose 1-phosphate degradation; D-glyceraldehyde 3-phosphate and acetaldehyde from 2-deoxy-alpha-D-ribose 1-phosphate: step 2/2. Functionally, catalyzes a reversible aldol reaction between acetaldehyde and D-glyceraldehyde 3-phosphate to generate 2-deoxy-D-ribose 5-phosphate. The polypeptide is Deoxyribose-phosphate aldolase (Thermosynechococcus vestitus (strain NIES-2133 / IAM M-273 / BP-1)).